The sequence spans 504 residues: DnaJ homolog subfamily C member 3 (504 aa).

The first 31 residues, 1 to 31 (MVAPGSVRSRLGAVFPFLLVLVDLQYEGAEC), serve as a signal peptide directing secretion. TPR repeat units follow at residues 37-70 (VEKH…DPDN), 72-104 (IAYY…KMDF), 105-138 (TAAR…NPSE), 154-187 (MQRL…CVWD), 188-221 (AELR…KNDN), 222-255 (TEAF…DQDH), 268-301 (LNKL…EPSV), 306-339 (VRSK…EPDN), and 340-373 (VNAL…NEND). C248 and C258 are oxidised to a cystine. Position 274 is a phosphoserine (S274). A disulfide bridge connects residues C313 and C329. Residues 375 to 393 (QIREGLEKAQRLLKQSQKR) form a flexible linker region. The 69-residue stretch at 394–462 (DYYKILGVKR…EMRRKFDDGE (69 aa)) folds into the J domain. Residues 451–481 (DPEMRRKFDDGEDPLDAETQQGGGSNPFHRS) are disordered. S475 is subject to Phosphoserine.

As to quaternary structure, interacts with EIF2AK2 and EIF2AK3. Forms a trimeric complex with DNAJB1 and HSPA8. Interacts with THAP12.

The protein localises to the endoplasmic reticulum. Involved in the unfolded protein response (UPR) during ER stress. Co-chaperone of HSPA8/HSC70, it stimulates its ATPase activity. May inhibit both the autophosphorylation of EIF2AK2/PKR and the ability of EIF2AK2 to catalyze phosphorylation of the EIF2A. May inhibit EIF2AK3/PERK activity. The chain is DnaJ homolog subfamily C member 3 (Dnajc3) from Rattus norvegicus (Rat).